Reading from the N-terminus, the 271-residue chain is Type III pantothenate kinase (271 aa).

Asp-6 to Val-13 provides a ligand contact to ATP. Gly-109 to Arg-112 contacts substrate. The active-site Proton acceptor is the Asp-111. Asp-131 is a binding site for K(+). Residue Thr-134 participates in ATP binding. Thr-186 serves as a coordination point for substrate.

The protein belongs to the type III pantothenate kinase family. Homodimer. NH4(+) is required as a cofactor. K(+) serves as cofactor.

It is found in the cytoplasm. It carries out the reaction (R)-pantothenate + ATP = (R)-4'-phosphopantothenate + ADP + H(+). Its pathway is cofactor biosynthesis; coenzyme A biosynthesis; CoA from (R)-pantothenate: step 1/5. Catalyzes the phosphorylation of pantothenate (Pan), the first step in CoA biosynthesis. The protein is Type III pantothenate kinase of Rhodococcus opacus (strain B4).